The primary structure comprises 164 residues: Transcription elongation factor GreA (164 aa).

A coiled-coil region spans residues 50 to 76 (YHAAREEQGQQEARIRQLQELLNNAKV).

The protein belongs to the GreA/GreB family.

Its function is as follows. Necessary for efficient RNA polymerase transcription elongation past template-encoded arresting sites. The arresting sites in DNA have the property of trapping a certain fraction of elongating RNA polymerases that pass through, resulting in locked ternary complexes. Cleavage of the nascent transcript by cleavage factors such as GreA or GreB allows the resumption of elongation from the new 3'terminus. GreA releases sequences of 2 to 3 nucleotides. The sequence is that of Transcription elongation factor GreA from Mycolicibacterium smegmatis (strain ATCC 700084 / mc(2)155) (Mycobacterium smegmatis).